Consider the following 479-residue polypeptide: V-type ATP synthase beta chain (479 aa).

Residues 458–479 (EGDSEREAPKMDSPHEEISEKS) are disordered.

Belongs to the ATPase alpha/beta chains family.

Its function is as follows. Produces ATP from ADP in the presence of a proton gradient across the membrane. The V-type beta chain is a regulatory subunit. The sequence is that of V-type ATP synthase beta chain from Nitrosococcus oceani (strain ATCC 19707 / BCRC 17464 / JCM 30415 / NCIMB 11848 / C-107).